An 89-amino-acid chain; its full sequence is Class I hydrophobin C (89 aa).

The first 16 residues, 1-16, serve as a signal peptide directing secretion; it reads MKFSLATIALAAAVAA. Cystine bridges form between C28/C68, C39/C60, C40/C52, and C69/C85. An N-linked (GlcNAc...) asparagine glycan is attached at N36.

It belongs to the fungal hydrophobin family.

The protein resides in the secreted. It is found in the cell wall. Its subcellular location is the vacuole. It localises to the cytoplasmic vesicle. Its function is as follows. Aerial growth, conidiation, and dispersal of filamentous fungi in the environment rely upon a capability of their secreting small amphipathic proteins called hydrophobins (HPBs) with low sequence identity. Class I can self-assemble into an outermost layer of rodlet bundles on aerial cell surfaces, conferring cellular hydrophobicity that supports fungal growth, development and dispersal; whereas Class II form highly ordered films at water-air interfaces through intermolecular interactions but contribute nothing to the rodlet structure. Hyd1C contributes to certain cell wall-related features, such as hydrophobicity but is not involved in cell wall-related events during fungal proliferation in host hemocoel. Does not contribute to conidial hydrophobicity. In Beauveria bassiana (strain ARSEF 2860) (White muscardine disease fungus), this protein is Class I hydrophobin C.